A 380-amino-acid polypeptide reads, in one-letter code: Probable inactive dehydrogenase easA (380 aa).

FMN-binding positions include 25–27 (PMT), Ala60, Gln102, and His171. 2 residues coordinate substrate: His171 and Asn174. Residues Lys223, Gly299, 324–325 (GR), and Arg325 contribute to the FMN site. Residue Tyr352 participates in substrate binding.

It belongs to the NADH:flavin oxidoreductase/NADH oxidase family.

Probable inactive dehydrogenase; part of the gene cluster that mediates the biosynthesis of fungal ergot alkaloid. DmaW catalyzes the first step of ergot alkaloid biosynthesis by condensing dimethylallyl diphosphate (DMAP) and tryptophan to form 4-dimethylallyl-L-tryptophan. The second step is catalyzed by the methyltransferase easF that methylates 4-dimethylallyl-L-tryptophan in the presence of S-adenosyl-L-methionine, resulting in the formation of 4-dimethylallyl-L-abrine. The catalase easC and the FAD-dependent oxidoreductase easE then transform 4-dimethylallyl-L-abrine to chanoclavine-I which is further oxidized by easD in the presence of NAD(+), resulting in the formation of chanoclavine-I aldehyde. Agroclavine dehydrogenase easG then mediates the conversion of chanoclavine-I aldehyde to agroclavine via a non-enzymatic adduct reaction: the substrate is an iminium intermediate that is formed spontaneously from chanoclavine-I aldehyde in the presence of glutathione. The presence of easA is not required to complete this reaction. Further conversion of agroclavine to paspalic acid is a two-step process involving oxidation of agroclavine to elymoclavine and of elymoclavine to paspalic acid, the second step being performed by the elymoclavine oxidase cloA. Paspalic acid is then further converted to D-lysergic acid. Ergopeptines are assembled from D-lysergic acid and three different amino acids by the D-lysergyl-peptide-synthetases composed each of a monomudular and a trimodular nonribosomal peptide synthetase subunit. LpsB and lpsC encode the monomodular subunits responsible for D-lysergic acid activation and incorporation into the ergopeptine backbone. LpsA1 and A2 subunits encode the trimodular nonribosomal peptide synthetase assembling the tripeptide portion of ergopeptines. LpsA1 is responsible for formation of the major ergopeptine, ergotamine, and lpsA2 for alpha-ergocryptine, the minor ergopeptine of the total alkaloid mixture elaborated by C.purpurea. D-lysergyl-tripeptides are assembled by the nonribosomal peptide synthetases and released as N-(D-lysergyl-aminoacyl)-lactams. Cyclolization of the D-lysergyl-tripeptides is performed by the Fe(2+)/2-ketoglutarate-dependent dioxygenase easH which introduces a hydroxyl group into N-(D-lysergyl-aminoacyl)-lactam at alpha-C of the aminoacyl residue followed by spontaneous condensation with the terminal lactam carbonyl group. The polypeptide is Probable inactive dehydrogenase easA (Claviceps purpurea (Ergot fungus)).